The sequence spans 435 residues: Aspartate aminotransferase (435 aa).

Pyridoxal 5'-phosphate is bound by residues Tyr-69 and 100 to 101; that span reads SL. 139 to 141 contacts substrate; the sequence is YDR. Residues Asn-189, Tyr-221, and 254 to 256 each bind pyridoxal 5'-phosphate; that span reads STS. Residue Arg-392 participates in substrate binding.

This sequence belongs to the class-I pyridoxal-phosphate-dependent aminotransferase family. Requires pyridoxal 5'-phosphate as cofactor.

The enzyme catalyses L-aspartate + 2-oxoglutarate = oxaloacetate + L-glutamate. Its function is as follows. Main aspartate aminotransferase that couples nitrogen assimilation to aspartate synthesis. Has a weak, but significant, side activity toward kynurenine (Kyn). Oxaloacetate and 2-oxoglutarate, but not pyruvate, serve as amino acceptors, while Asp, Glu and Kyn serve as the best amino donors. Essential for axenic growth and survival of M.tuberculosis in macrophages and in mice. The polypeptide is Aspartate aminotransferase (Mycobacterium tuberculosis (strain ATCC 25618 / H37Rv)).